A 1047-amino-acid chain; its full sequence is Cation efflux system protein CusA (1047 aa).

12 helical membrane passes run 14–34 (FLVL…IINT), 338–358 (LSGK…LFLW), 363–383 (ALVA…VMHF), 391–411 (MSLG…IVMI), 446–466 (VGPA…PIFT), 485–505 (AMAG…GYWI), 532–552 (VLHW…TVLW), 871–891 (KLKL…YLAF), 898–918 (LLII…LWWM), 928–948 (TGFI…LMYL), 985–1005 (AMTV…TGAG), and 1012–1032 (IAAP…FIIP).

This sequence belongs to the resistance-nodulation-cell division (RND) (TC 2.A.6) family. As to quaternary structure, the cus efflux system is composed of CusA, CusB, CusC and CusF.

Its subcellular location is the cell inner membrane. Its function is as follows. Part of a cation efflux system that mediates resistance to copper and silver. The sequence is that of Cation efflux system protein CusA (cusA) from Escherichia coli (strain K12).